We begin with the raw amino-acid sequence, 324 residues long: ATP-dependent 6-phosphofructokinase (324 aa).

Gly-11 provides a ligand contact to ATP. 21–25 (RAVVR) serves as a coordination point for ADP. ATP is bound by residues 72–73 (RE) and 102–105 (GNGS). A Mg(2+)-binding site is contributed by Asn-103. 126–128 (TID) is a substrate binding site. The active-site Proton acceptor is the Asp-128. Arg-155 contacts ADP. Substrate is bound by residues Arg-163 and 170–172 (MGR). ADP is bound by residues 186–188 (GAD), Arg-212, and 214–216 (KKF). Residues Glu-223, Arg-248, and 254–257 (YIQR) contribute to the substrate site.

Belongs to the phosphofructokinase type A (PFKA) family. ATP-dependent PFK group I subfamily. Prokaryotic clade 'B1' sub-subfamily. As to quaternary structure, homotetramer. Requires Mg(2+) as cofactor.

Its subcellular location is the cytoplasm. It catalyses the reaction beta-D-fructose 6-phosphate + ATP = beta-D-fructose 1,6-bisphosphate + ADP + H(+). It participates in carbohydrate degradation; glycolysis; D-glyceraldehyde 3-phosphate and glycerone phosphate from D-glucose: step 3/4. Allosterically activated by ADP and other diphosphonucleosides, and allosterically inhibited by phosphoenolpyruvate. In terms of biological role, catalyzes the phosphorylation of D-fructose 6-phosphate to fructose 1,6-bisphosphate by ATP, the first committing step of glycolysis. The sequence is that of ATP-dependent 6-phosphofructokinase from Persephonella marina (strain DSM 14350 / EX-H1).